The chain runs to 581 residues: MAVRQALGRGLQLGRALLLRFTGKPGRAYGLGRPGPAAGCVRGERPGWAAGPGAEPRRVGLGLPNRLRFFRQSVAGLAARLQRQFVVRAWGCAGPCGRAVFLAFGLGLGLIEEKQAESRRAVSACQEIQAIFTQKSKPGPDPLDTRRLQGFRLEEYLIGQSIGKGCSAAVYEATMPTLPQNLEVTKSTGLLPGRGPGTSAPGEGQERAPGAPAFPLAIKMMWNISAGSSSEAILNTMSQELVPASRVALAGEYGAVTYRKSKRGPKQLAPHPNIIRVLRAFTSSVPLLPGALVDYPDVLPSRLHPEGLGHGRTLFLVMKNYPCTLRQYLCVNTPSPRLAAMMLLQLLEGVDHLVQQGIAHRDLKSDNILVELDPDGCPWLVIADFGCCLADESIGLQLPFSSWYVDRGGNGCLMAPEVSTARPGPRAVIDYSKADAWAVGAIAYEIFGLVNPFYGQGKAHLESRSYQEAQLPALPESVPPDVRQLVRALLQREASKRPSARVAANVLHLSLWGEHILALKNLKLDKMVGWLLQQSAATLLANRLTEKCCVETKMKMLFLANLECETLCQAALLLCSWRAAL.

The N-terminal 77 residues, 1-77 (MAVRQALGRG…RFFRQSVAGL (77 aa)), are a transit peptide targeting the mitochondrion. The Mitochondrial intermembrane segment spans residues 78–93 (AARLQRQFVVRAWGCA). Residues 94–110 (GPCGRAVFLAFGLGLGL) form a helical membrane-spanning segment. Residues 111–117 (IEEKQAE) form a required for outer membrane localization region. Residues 111–581 (IEEKQAESRR…LLLCSWRAAL (471 aa)) lie on the Cytoplasmic side of the membrane. In terms of domain architecture, Protein kinase spans 156–511 (YLIGQSIGKG…VAANVLHLSL (356 aa)). ATP is bound by residues 162-170 (IGKGCSAAV) and Lys-186. Positions 189 to 208 (GLLPGRGPGTSAPGEGQERA) are disordered. Ser-228 carries the phosphoserine; by autocatalysis modification. Asp-362 acts as the Proton acceptor in catalysis. Ser-402 is modified (phosphoserine; by autocatalysis).

It belongs to the protein kinase superfamily. Ser/Thr protein kinase family. In terms of assembly, upon mitochondrial depolarization, it forms a supercomplex with TOM and TIM23 complexes. PINK1-TOM-TIM23 supercomplex formation requires PINK1 interaction with TOMM20 and TOMM70 and is critical for PINK1 stabilization at the outer mitochondrial membrane, kinase activation and downstream mitophagy. Upon mitochondrial depolarization, interacts with TIMM23; the interaction is required for PINK1 accumulation at the outer mitochondrial membrane, kinase activation by autophosphorylation and PRKN recruitement to mitochondria. Interacts with PRKN. Interacts with FBXO7. Forms a complex with PRKN and PARK7. Interacts with NENF. It depends on Mg(2+) as a cofactor. In terms of processing, proteolytically cleaved. In healthy cells, the precursor is continuously imported into the inner mitochondrial membrane (IMM), where it is proteolytically cleaved by mitochondrial-processing peptidase (MPP) and then undergoes further proteolytic cleavage by PARL or AFG3L2 to give rise to the 52 kDa short form. The 52 kDa short form is then released into the cytosol where it rapidly undergoes proteasome-dependent degradation. In unhealthy cells, when cellular stress conditions lead to the loss of mitochondrial membrane potential, mitochondrial import is impaired leading to the precursor accumulating on the outer mitochondrial membrane (OMM). If accumulation at the OMM fails and it is imported into the depolarized mitochondria, it undergoes cleavage by the IMM protease OMA1, promoting its subsequent degradation by the proteasome. Post-translationally, autophosphorylated. Loss of mitochondrial membrane potential results in the precursor accumulating on the outer mitochondrial membrane (OMM) where it is activated by autophosphorylation. Autophosphorylation at Ser-228 and Ser-402 is sufficient and essential for selective recruitment of PRKN to depolarized mitochondria, via PINK1-dependent phosphorylation of ubiquitin and maybe PRKN. Highly expressed in heart, skeletal muscle and testis, and at lower levels in brain, placenta, liver, kidney, pancreas, prostate, ovary and small intestine. Present in the embryonic testis from an early stage of development.

It localises to the mitochondrion outer membrane. Its subcellular location is the mitochondrion inner membrane. The protein localises to the cytoplasm. It is found in the cytosol. It catalyses the reaction L-seryl-[protein] + ATP = O-phospho-L-seryl-[protein] + ADP + H(+). The catalysed reaction is L-threonyl-[protein] + ATP = O-phospho-L-threonyl-[protein] + ADP + H(+). In terms of biological role, serine/threonine-protein kinase which acts as a sensor of mitochondrial damage and protects against mitochondrial dysfunction during cellular stress. It phosphorylates mitochondrial proteins to coordinate mitochondrial quality control mechanisms that remove and replace dysfunctional mitochondrial components. Depending on the severity of mitochondrial damage, activity ranges from preventing apoptosis and stimulating mitochondrial biogenesis to eliminating severely damaged mitochondria via PINK1-PRKN-dependent mitophagy. When cellular stress results in irreversible mitochondrial damage, PINK1 accumulates at the outer mitochondrial membrane (OMM) where it phosphorylates pre-existing polyubiquitin chains at 'Ser-65', recruits PRKN from the cytosol to the OMM and activates PRKN by phosphorylation at 'Ser-65'; activated PRKN then ubiquinates VDAC1 and other OMM proteins to initiate mitophagy. The PINK1-PRKN pathway also promotes fission of damaged mitochondria through phosphorylation and PRKN-dependent degradation of mitochondrial proteins involved in fission such as MFN2. This prevents the refusion of unhealthy mitochondria with the mitochondrial network or initiates mitochondrial fragmentation facilitating their later engulfment by autophagosomes. Also promotes mitochondrial fission independently of PRKN and ATG7-mediated mitophagy, via the phosphorylation and activation of DNM1L. Regulates motility of damaged mitochondria by promoting the ubiquitination and subsequent degradation of MIRO1 and MIRO2; in motor neurons, this likely inhibits mitochondrial intracellular anterograde transport along the axons which probably increases the chance of the mitochondria undergoing mitophagy in the soma. Required for ubiquinone reduction by mitochondrial complex I by mediating phosphorylation of complex I subunit NDUFA10. Phosphorylates LETM1, positively regulating its mitochondrial calcium transport activity. This chain is Serine/threonine-protein kinase PINK1, mitochondrial (PINK1), found in Homo sapiens (Human).